Reading from the N-terminus, the 480-residue chain is MAGVRHDDGSGLIAQRRPVRGEGATRSRGPSGPSNRNVSAADDPRRVALLAVHTSPLAQPGTGDAGGMNVYMLQSALHLARRGIEVEIFTRATASADPPVVRVAPGVLVRNVVAGPFEGLDKYDLPTQLCAFAAGVLRAEAVHEPGYYDIVHSHYWLSGQVGWLARDRWAVPLVHTAHTLAAVKNAALADGDGPEPPLRTVGEQQVVDEADRLIVNTDDEARQVISLHGADPARIDVVHPGVDLDVFRPGDRRAARAALGLPVDERVVAFVGRIQPLKAPDIVLRAAAKLPGVRIIVAGGPSGSGLASPDGLVRLADELGISARVTFLPPQSHTDLATLFRAADLVAVPSYSESFGLVAVEAQACGTPVVAAAVGGLPVAVRDGITGTLVSGHEVGQWADAIDHLLRLCAGPRGRVMSRAAARHAATFSWENTTDALLASYRRAIGEYNAERQRRGGEVISDLVAVGKPRHWTPRRGVGA.

Positions 1–42 (MAGVRHDDGSGLIAQRRPVRGEGATRSRGPSGPSNRNVSAAD) are disordered. His-53 lines the 1D-myo-inositol 3-phosphate pocket. UDP-N-acetyl-alpha-D-glucosamine-binding positions include 59-60 (QP) and Gly-67. 1D-myo-inositol 3-phosphate contacts are provided by residues 64-69 (DAGGMN), Lys-122, Tyr-155, Thr-179, and Arg-199. UDP-N-acetyl-alpha-D-glucosamine is bound by residues Arg-273, Lys-278, and Gln-331. Phe-340, Arg-341, and Ala-343 together coordinate Mg(2+). Residues Glu-353 and Glu-361 each contribute to the UDP-N-acetyl-alpha-D-glucosamine site. Residue Thr-367 participates in Mg(2+) binding.

It belongs to the glycosyltransferase group 1 family. MshA subfamily. As to quaternary structure, homodimer.

The catalysed reaction is 1D-myo-inositol 3-phosphate + UDP-N-acetyl-alpha-D-glucosamine = 1D-myo-inositol 2-acetamido-2-deoxy-alpha-D-glucopyranoside 3-phosphate + UDP + H(+). Functionally, catalyzes the transfer of a N-acetyl-glucosamine moiety to 1D-myo-inositol 3-phosphate to produce 1D-myo-inositol 2-acetamido-2-deoxy-glucopyranoside 3-phosphate in the mycothiol (MSH) biosynthesis pathway. MSH and WhiB3 are probably part of a regulatory circuit that mediates gene expression upon acid stress (like that found in host macrophage phagosomes). MSH is one of the major redox buffers which protects bacteria against redox stressors and antibiotics; loss of MSH or ergothioneine (ERG, the other major redox buffer in this bacteria) leads to respiratory alterations and bioenergetic deficiencies that negatively impact virulence. The sequence is that of D-inositol 3-phosphate glycosyltransferase (mshA) from Mycobacterium bovis (strain ATCC BAA-935 / AF2122/97).